The primary structure comprises 348 residues: Protein RecA (348 aa).

64–71 (GPESSGKT) lines the ATP pocket. Residues 325–335 (YEIDGSNKEPL) are compositionally biased toward basic and acidic residues. The segment at 325–348 (YEIDGSNKEPLDEGEETLSLLDDE) is disordered. Over residues 336–348 (DEGEETLSLLDDE) the composition is skewed to acidic residues.

Belongs to the RecA family.

It localises to the cytoplasm. Can catalyze the hydrolysis of ATP in the presence of single-stranded DNA, the ATP-dependent uptake of single-stranded DNA by duplex DNA, and the ATP-dependent hybridization of homologous single-stranded DNAs. It interacts with LexA causing its activation and leading to its autocatalytic cleavage. In Listeria monocytogenes serotype 4b (strain CLIP80459), this protein is Protein RecA.